A 264-amino-acid polypeptide reads, in one-letter code: MDVSQTIVLALIQGLSEFLPISSSAHLILVPKLTNWTDQGLIFDVVVHMGTLSAVIFYYQAMIRSLFFDFYYSIIKRQIIGQSKLAWGVLLGTIPIGLVGMIFKDFVAVDLRSIEIIAYTTLVFGLLLGFASWFNHKNKNPKSTISWIDVSFVSMMQILALIPGTSRSGITITACMLVGLSRKLSIQFSFLLSIPVITLSLILMLIDLYHQTQLVNVSLLVLGFVISTISAYATIIFVIRLIDMVGMTPFVIYRLILGVFLFFL.

8 helical membrane passes run 7–27 (IVLA…SAHL), 41–61 (LIFD…YYQA), 89–109 (VLLG…FVAV), 114–134 (IEII…ASWF), 144–164 (TISW…LIPG), 186–206 (IQFS…LMLI), 219–239 (LLVL…IFVI), and 244–264 (MVGM…LFFL).

Belongs to the UppP family.

It is found in the cell inner membrane. The enzyme catalyses di-trans,octa-cis-undecaprenyl diphosphate + H2O = di-trans,octa-cis-undecaprenyl phosphate + phosphate + H(+). Functionally, catalyzes the dephosphorylation of undecaprenyl diphosphate (UPP). Confers resistance to bacitracin. The chain is Undecaprenyl-diphosphatase from Vesicomyosocius okutanii subsp. Calyptogena okutanii (strain HA).